The following is a 432-amino-acid chain: Short transient receptor potential channel 2 homolog (432 aa).

4 consecutive transmembrane segments (helical) span residues 1–21 (MVIL…AGLA), 52–72 (FLAE…LASI), 96–116 (FMFI…NIYV), and 162–182 (LYGI…IAMI). The tract at residues 356–432 (QNLGPPIPET…EADLGAKEGT (77 aa)) is disordered. Residues 387–404 (AGGAQAPASGESGPSSPA) show a composition bias toward low complexity.

The protein belongs to the transient receptor (TC 1.A.4) family. STrpC subfamily. TRPC2 sub-subfamily.

It is found in the membrane. Functionally, thought to form a receptor-activated calcium permeant cation channel. This is Short transient receptor potential channel 2 homolog (TRPC2) from Bos taurus (Bovine).